A 619-amino-acid polypeptide reads, in one-letter code: TOX high mobility group box family member 4 (619 aa).

Disordered regions lie at residues 155–227 (LSLG…QKPV), 304–335 (ELDPVPQSQTPSPPPVTTADPASPAPASTESP), and 436–458 (LPPPRLQPPPLQQMPQPPTQQQV). T176 carries the phosphothreonine modification. Phosphoserine is present on residues S178 and S182. Residues 183–193 (LHEDGVDDFRR) show a composition bias toward basic and acidic residues. The segment covering 208–218 (KQKAPKKRKKK) has biased composition (basic residues). Residues 213-218 (KKRKKK) carry the Nuclear localization signal motif. The HMG box DNA-binding region spans 223 to 291 (PQKPVSAYAL…EYLKALAAYK (69 aa)). At T313 the chain carries Phosphothreonine. S315 carries the phosphoserine modification. Low complexity predominate over residues 320–335 (TTADPASPAPASTESP). The span at 436-453 (LPPPRLQPPPLQQMPQPP) shows a compositional bias: pro residues. An Asymmetric dimethylarginine modification is found at R479. Phosphoserine occurs at positions 531, 548, 550, 558, 560, and 565.

As to quaternary structure, component of the PNUTS-PP1 phosphatase complex, composed of PPP1R10/PNUTS, TOX4, WDR82 and PPP1CA or PPP1CB or PPP1CC. Interacts with PPP1R10/PNUTS. Interacts with FOXO1 and CREB1 (increased by cAMP); FOXO1 and CREB1 are required for full induction of TOX4-dependent activity and the interactions are inhibited by insulin.

The protein localises to the nucleus. Its subcellular location is the chromosome. In liver, recruited to target gene promoters following treatment with dexamethasone and cAMP. Binding is decreased in presence of insulin. In terms of biological role, transcription factor that modulates cell fate reprogramming from the somatic state to the pluripotent and neuronal fate. In liver, controls the expression of hormone-regulated gluconeogenic genes such as G6PC1 and PCK1. This regulation is independent of the insulin receptor activation. Also acts as a regulatory component of protein phosphatase 1 (PP1) complexes. Component of the PNUTS-PP1 protein phosphatase complex, a PP1 complex that regulates RNA polymerase II transcription pause-release. PNUTS-PP1 also plays a role in the control of chromatin structure and cell cycle progression during the transition from mitosis into interphase. This Rattus norvegicus (Rat) protein is TOX high mobility group box family member 4 (Tox4).